A 74-amino-acid polypeptide reads, in one-letter code: Cyclin-dependent kinases regulatory subunit (74 aa).

Belongs to the CKS family. As to quaternary structure, forms a homohexamer that can probably bind six kinase subunits.

In terms of biological role, binds to the catalytic subunit of the cyclin dependent kinases Cdk1 and Cdk2, and is essential for their biological function. The protein is Cyclin-dependent kinases regulatory subunit (Cks30A) of Drosophila melanogaster (Fruit fly).